A 448-amino-acid polypeptide reads, in one-letter code: MMIKIYDTMTRSLREFVPITDKVVNMYVCGPTVYNYIHIGNARSAVAFDTVRRYFEYAGYTVNYISNFTDVDDKIIKAAKEAGLSPKQLADQFIAAFMEDTKALGVKPATKNPRVMDYMDEIIAFIAALIKKGYAYESAGDVYFRVAKASNYARLANKTIADLEAGASGRTDTETALKENPLDFALWKSAKPGEVSWTSPWSAGRPGWHIECSVMATELLGDTIDIHGGGADLEFPHHTNEIAQSEAKTSKTFANYWMHNGFVNVDNEKMSKSLGNFVTVHDLLKTVDGQTLRFFLATQHYRKPINFTEKAIHDAEVNLKYLKNTLQQPTVATADSSQLAAFVTAFKAAMNDDFNTANGITVLFDMAKWINSGAYSEAVKSAFEEMLAVFGIVFEAESLDTEIEQLIAERQEARANRDFAKADAIRDQLAAQGIKLLDTKDGVRWIRD.

Residue cysteine 29 coordinates Zn(2+). The 'HIGH' region motif lies at 31-41 (PTVYNYIHIGN). Zn(2+)-binding residues include cysteine 212, histidine 237, and glutamate 241. The 'KMSKS' region signature appears at 269-273 (KMSKS). Lysine 272 is an ATP binding site.

This sequence belongs to the class-I aminoacyl-tRNA synthetase family. Monomer. Requires Zn(2+) as cofactor.

The protein localises to the cytoplasm. It catalyses the reaction tRNA(Cys) + L-cysteine + ATP = L-cysteinyl-tRNA(Cys) + AMP + diphosphate. The sequence is that of Cysteine--tRNA ligase from Streptococcus equi subsp. zooepidemicus (strain MGCS10565).